Here is a 521-residue protein sequence, read N- to C-terminus: Glutamate--tRNA ligase (521 aa).

Residues 30–40 (PSPTGYLHVGG) carry the 'HIGH' region motif. The 'KMSKS' region motif lies at 277 to 281 (KLSKR). K280 serves as a coordination point for ATP.

This sequence belongs to the class-I aminoacyl-tRNA synthetase family. Glutamate--tRNA ligase type 1 subfamily. Monomer.

Its subcellular location is the cytoplasm. It catalyses the reaction tRNA(Glu) + L-glutamate + ATP = L-glutamyl-tRNA(Glu) + AMP + diphosphate. Its function is as follows. Catalyzes the attachment of glutamate to tRNA(Glu) in a two-step reaction: glutamate is first activated by ATP to form Glu-AMP and then transferred to the acceptor end of tRNA(Glu). The chain is Glutamate--tRNA ligase from Chlorobium phaeovibrioides (strain DSM 265 / 1930) (Prosthecochloris vibrioformis (strain DSM 265)).